A 698-amino-acid polypeptide reads, in one-letter code: Probable microcin-H47 secretion/processing ATP-binding protein MchF (698 aa).

Residues 26 to 145 (QTETAECGLA…RYFTGIALEV (120 aa)) enclose the Peptidase C39 domain. The active site involves Cys32. 5 consecutive transmembrane segments (helical) span residues 33 to 53 (GLACLAMICGHFGKNIDLISL), 90 to 110 (LGALKMPCILHWDFSHFVVLV), 289 to 311 (TCVVGAIMDSIMVVGVFVMMLLY), 315 to 337 (LTWIVLGFTMVYVLIRLVTYGYY), and 397 to 417 (LLFGGINTFVAACDQVAILWL). The ABC transmembrane type-1 domain occupies 176–458 (LAKIFCLSVV…LTSFLLQLRI (283 aa)). Residues 492–698 (LETTDLSYRY…LRTVDRIISI (207 aa)) enclose the ABC transporter domain. Residue 526 to 533 (GASGAGKT) coordinates ATP.

The protein belongs to the ABC transporter superfamily.

It is found in the cell membrane. In terms of biological role, probably involved, in conjunction with MchE, in the secretion of microcin H47. The chain is Probable microcin-H47 secretion/processing ATP-binding protein MchF (mchF) from Escherichia coli.